A 411-amino-acid chain; its full sequence is Common plant regulatory factor 1 (411 aa).

Residues 1-14 (MGNTDDVKAVKPEK) show a composition bias toward basic and acidic residues. Disordered regions lie at residues 1 to 30 (MGNT…SNSH), 130 to 197 (AMSI…SSVI), and 232 to 293 (SSLE…KQAE). Residues 148-164 (TLSQSKETEGSSDGSNE) are compositionally biased toward polar residues. Residues 235 to 244 (ELKDSPKEHA) are compositionally biased toward basic and acidic residues. A compositionally biased stretch (polar residues) spans 249–259 (AGGQQPSTMMP). Residues 264–293 (LHNDRDLKRERRKQSNRESARRSRLRKQAE) are compositionally biased toward basic and acidic residues. In terms of domain architecture, bZIP spans 269 to 332 (DLKRERRKQS…EKLTNDNSRL (64 aa)). Positions 271–290 (KRERRKQSNRESARRSRLRK) are basic motif. Residues 297-332 (LAIKVDSLTAENMALKAEINRLTLTAEKLTNDNSRL) form a leucine-zipper region. The tract at residues 346–411 (DVGLGNNNEK…NPRTDAVAAG (66 aa)) is disordered.

This sequence belongs to the bZIP family. In terms of assembly, binds DNA as a dimer.

The protein localises to the nucleus. In terms of biological role, binds to the G-box-like motif (5'-ACGTGGC-3') of the chalcone synthase (CHS) gene promoter. G-box and G-box-like motifs are defined in promoters of certain plant genes which are regulated by such diverse stimuli as light-induction or hormone control. The polypeptide is Common plant regulatory factor 1 (CPRF1) (Petroselinum crispum (Parsley)).